Here is a 294-residue protein sequence, read N- to C-terminus: 4-hydroxy-tetrahydrodipicolinate synthase (294 aa).

Thr47 provides a ligand contact to pyruvate. The active-site Proton donor/acceptor is Tyr135. Lys163 serves as the catalytic Schiff-base intermediate with substrate. Ile206 lines the pyruvate pocket.

Belongs to the DapA family. Homodimer.

It localises to the cytoplasm. It catalyses the reaction L-aspartate 4-semialdehyde + pyruvate = (2S,4S)-4-hydroxy-2,3,4,5-tetrahydrodipicolinate + H2O + H(+). It functions in the pathway amino-acid biosynthesis; L-lysine biosynthesis via DAP pathway; (S)-tetrahydrodipicolinate from L-aspartate: step 3/4. Functionally, catalyzes the condensation of (S)-aspartate-beta-semialdehyde [(S)-ASA] and pyruvate to 4-hydroxy-tetrahydrodipicolinate (HTPA). The chain is 4-hydroxy-tetrahydrodipicolinate synthase from Staphylococcus carnosus (strain TM300).